A 1076-amino-acid polypeptide reads, in one-letter code: Vacuolar membrane protease (1076 aa).

At 1-11 (MKCYNPSAFVP) the chain is on the cytoplasmic side. A helical transmembrane segment spans residues 12–32 (MAVTLVTVVIYLGVFIPLLII). The Vacuolar portion of the chain corresponds to 33–437 (HETVPSAPDD…TVFAVFRLRT (405 aa)). N-linked (GlcNAc...) asparagine glycans are attached at residues Asn50, Asn99, and Asn156. His220 and Asp232 together coordinate Zn(2+). Catalysis depends on Glu266, which acts as the Proton acceptor. Zn(2+) contacts are provided by Glu267, Glu292, and His364. The chain crosses the membrane as a helical span at residues 438–458 (LFAWSLTLLIASPLILFAVSY). The Cytoplasmic portion of the chain corresponds to 459-491 (LLNRQEKFYFFAGSIKSKNPEDEPISLGGWRGA). A helical membrane pass occupies residues 492–512 (FRFPITLFITSAITFACASLI). At 513-525 (NKINPMIIYSSPY) the chain is on the vacuolar side. Residues 526–546 (AVWSMSATLFFSVFWFIMAGC) traverse the membrane as a helical segment. At 547–556 (NFVRPSALQR) the chain is on the cytoplasmic side. A helical membrane pass occupies residues 557 to 577 (GYAFMWMFVFGWILLVVATVY). The Vacuolar portion of the chain corresponds to 578–584 (EDRFKIS). Residues 585 to 605 (GGYLFVFYEAAIFLATLIAIC) form a helical membrane-spanning segment. At 606–738 (EQFALPRKST…LPIWTWLVQY (133 aa)) the chain is on the cytoplasmic side. Disordered stretches follow at residues 619–662 (DSQN…EETV) and 701–720 (SYDG…HPYG). Positions 621-632 (QNDHSDNQDHHH) are enriched in basic and acidic residues. The span at 647–660 (PNADDEAAEEDQEE) shows a compositional bias: acidic residues. A helical membrane pass occupies residues 739–759 (LLVGPFILVILGQVGLFLVAA). The Vacuolar portion of the chain corresponds to 760 to 771 (LHQTGTDGSPLF). A helical transmembrane segment spans residues 772–792 (LPYLIVAIFSILLLLPVTPFI). Residues 793-799 (HRLTHHM) are Cytoplasmic-facing. Residues 800–820 (PTFFFLVFIGTLIYNLVAFPF) traverse the membrane as a helical segment. Residues 821 to 1076 (SPNNRYKAYF…LGLAFLLAYV (256 aa)) lie on the Vacuolar side of the membrane. Asn912 is a glycosylation site (N-linked (GlcNAc...) asparagine).

It belongs to the peptidase M28 family. Requires Zn(2+) as cofactor.

It localises to the vacuole membrane. In terms of biological role, may be involved in vacuolar sorting and osmoregulation. The sequence is that of Vacuolar membrane protease from Sclerotinia sclerotiorum (strain ATCC 18683 / 1980 / Ss-1) (White mold).